Here is a 756-residue protein sequence, read N- to C-terminus: Protease KEX1 (756 aa).

Positions 1-24 (MILSSQLMLALIAVSGYGKAMQVP) are cleaved as a signal peptide. Asn-121, Asn-144, and Asn-152 each carry an N-linked (GlcNAc...) asparagine glycan. The 311-residue stretch at 130–440 (QWHLINPNYP…FGKLDAYNIV (311 aa)) folds into the Peptidase S8 domain. Active-site charge relay system residues include Asp-164 and His-202. Disulfide bonds link Cys-218–Cys-365 and Cys-310–Cys-340. Ser-373 acts as the Charge relay system in catalysis. Asn-392 and Asn-538 each carry an N-linked (GlcNAc...) asparagine glycan. Residues 449–583 (VNPQGWLYLP…RLKMFGETID (135 aa)) enclose the P/Homo B domain. The tract at residues 599 to 632 (AEVKSTESKTTTPTAQTSSFTTTSGEETSGANKL) is disordered. Low complexity predominate over residues 606–628 (SKTTTPTAQTSSFTTTSGEETSG). The helical transmembrane segment at 641–661 (LYLAIFVIGAIVIIIYYLFFL) threads the bilayer. Residues 715–756 (EEELSPRESSSNNPFGNESLESFDNSPDHTSNLLGQNSIPNK) form a disordered region. The span at 721–756 (RESSSNNPFGNESLESFDNSPDHTSNLLGQNSIPNK) shows a compositional bias: polar residues.

The protein belongs to the peptidase S8 family. Furin subfamily. Ca(2+) serves as cofactor.

Its subcellular location is the membrane. Functionally, probably involved in the processing of the precursor of m1-toxin and alpha-factor. The chain is Protease KEX1 (KEX1) from Kluyveromyces lactis (strain ATCC 8585 / CBS 2359 / DSM 70799 / NBRC 1267 / NRRL Y-1140 / WM37) (Yeast).